The following is a 267-amino-acid chain: MATGEPRDRGGYYFRFLPQRTFSSLSAREITNRLRQWSMLGRIQAQAFGFDQTFQPYQKDDFVTAFFKDPNVIPHLQLLAESSGQWTTLGTEVKRIEAINVPCTQLSMSFFQRLYDENIVRESGHIVKCLDSFCDPFLISDELRKVLLMEDSEKYEVFSPVEREEFLFCLFKHLCLGGSLCQYEDVLKPYLETAKLIYKDLVSVRKHPRTKEIQITSSVFKVKAYDSLGVCYPSPKEHEQTFSYFVVDPIKRHVNVLYHCYGVGEMA.

Belongs to the CFAP300 family. As to quaternary structure, interacts with DNAAF2.

Its subcellular location is the cytoplasm. The protein localises to the cytoskeleton. It localises to the cilium axoneme. In terms of biological role, cilium- and flagellum-specific protein that plays a role in axonemal structure organization and motility. May play a role in outer and inner dynein arm assembly. This chain is Cilia- and flagella-associated protein 300, found in Rattus norvegicus (Rat).